The sequence spans 709 residues: F-box only protein 40 (709 aa).

A TRAF-type zinc finger spans residues 53-112 (EHQLLCPLEQVPCLNSEYGCPLSMSRHKLAKHLQVCPASVVCCSMEWNRWPNVDSETTLH). Residues 232-280 (TNSSASCESKNKNDSEKEQISSGHNMVEGEGAPKKKEPQENQKQQDVRT) are disordered. 2 stretches are compositionally biased toward basic and acidic residues: residues 240-250 (SKNKNDSEKEQ) and 262-277 (GAPKKKEPQENQKQQD). The region spanning 570–624 (QNSLTSLPLEILKYIAGFLDSVSLAQLSQVSVLMRNICATLLQERGMVLLQWKKK) is the F-box domain.

As to quaternary structure, directly interacts with SKP1 and CUL1. In terms of tissue distribution, expressed only in heart and skeletal muscle.

The protein resides in the cytoplasm. In terms of biological role, probable substrate-recognition component of the SCF (SKP1-CUL1-F-box protein)-type E3 ubiquitin ligase complex that may function in myogenesis. The sequence is that of F-box only protein 40 (FBXO40) from Homo sapiens (Human).